The chain runs to 364 residues: Uroporphyrinogen decarboxylase (364 aa).

Residues 28–32, phenylalanine 47, aspartate 78, tyrosine 158, threonine 213, and histidine 334 contribute to the substrate site; that span reads RQAGR.

The protein belongs to the uroporphyrinogen decarboxylase family. As to quaternary structure, homodimer.

It is found in the cytoplasm. The enzyme catalyses uroporphyrinogen III + 4 H(+) = coproporphyrinogen III + 4 CO2. Its pathway is porphyrin-containing compound metabolism; protoporphyrin-IX biosynthesis; coproporphyrinogen-III from 5-aminolevulinate: step 4/4. Its function is as follows. Catalyzes the decarboxylation of four acetate groups of uroporphyrinogen-III to yield coproporphyrinogen-III. The chain is Uroporphyrinogen decarboxylase from Ralstonia nicotianae (strain ATCC BAA-1114 / GMI1000) (Ralstonia solanacearum).